Reading from the N-terminus, the 256-residue chain is Triosephosphate isomerase (256 aa).

10 to 12 (NWK) is a binding site for substrate. The active-site Electrophile is the histidine 97. Catalysis depends on glutamate 169, which acts as the Proton acceptor. Residues glycine 175, serine 214, and 235–236 (GG) each bind substrate.

The protein belongs to the triosephosphate isomerase family. Homodimer.

The protein resides in the cytoplasm. The enzyme catalyses D-glyceraldehyde 3-phosphate = dihydroxyacetone phosphate. It participates in carbohydrate biosynthesis; gluconeogenesis. The protein operates within carbohydrate degradation; glycolysis; D-glyceraldehyde 3-phosphate from glycerone phosphate: step 1/1. Its function is as follows. Involved in the gluconeogenesis. Catalyzes stereospecifically the conversion of dihydroxyacetone phosphate (DHAP) to D-glyceraldehyde-3-phosphate (G3P). The protein is Triosephosphate isomerase of Actinobacillus pleuropneumoniae serotype 7 (strain AP76).